Consider the following 103-residue polypeptide: Large ribosomal subunit protein bL21 (103 aa).

It belongs to the bacterial ribosomal protein bL21 family. As to quaternary structure, part of the 50S ribosomal subunit. Contacts protein L20.

Its function is as follows. This protein binds to 23S rRNA in the presence of protein L20. The protein is Large ribosomal subunit protein bL21 of Acinetobacter baylyi (strain ATCC 33305 / BD413 / ADP1).